Here is a 315-residue protein sequence, read N- to C-terminus: DDRGK domain-containing protein 1 (315 aa).

Residues 1–28 traverse the membrane as a helical segment; that stretch reads MVGPWVYLVAAVLLIGLILFLTRSRGRA. Positions 1–115 are mediates interaction with CDK5RAP3; sequence MVGPWVYLVA…IEKPAEVHPT (115 aa). The Cytoplasmic portion of the chain corresponds to 29–315; it reads AAADGEPLHN…GQDLPAQASA (287 aa). Residues 30 to 184 form a disordered region; that stretch reads AADGEPLHNE…ERKAQEEQAR (155 aa). Over residues 34–43 the composition is skewed to basic and acidic residues; the sequence is EPLHNEEERA. A Phosphoserine modification is found at serine 73. A mediates interaction with TRIP4 region spans residues 119–217; sequence GAKKLRKLEE…MTEEQSHSFL (99 aa). Basic and acidic residues predominate over residues 125 to 184; that stretch reads KLEEKQARKAQREAEEAEREERKRLESQREAEWKKEEERLRLKEEQKEEEERKAQEEQAR. Positions 196-210 match the UFM1-interacting motif (UFIM) motif; the sequence is AFVVEEEGVSETMTE. Residues 217-315 form a mediates interaction with UFL1 region; that stretch reads LTEFINYIKK…GQDLPAQASA (99 aa). One can recognise a PCI domain in the interval 230 to 274; sequence VLLEDLAFQMGLRTQDAINRIQDLLTEGTLTGVIDDRGKFIYITP. Lysine 268 participates in a covalent cross-link: Glycyl lysine isopeptide (Lys-Gly) (interchain with G-Cter in UFM1).

It belongs to the DDRGK1 family. In terms of assembly, component of the UFM1 ribosome E3 ligase (UREL) complex, composed of UFL1, DDRGK1 and CDK5RAP3. Interacts with (unphosphorylated) ERN1/IRE1-alpha; interaction is dependent on UFM1 and takes place in response to endoplasmic reticulum stress, regulating ERN1/IRE1-alpha stability. Interacts with NFKBIA. Interacts with SOX9. Ufmylated; conjugated to ubiquitin-like protein UFM1, probably at Lys-268 by UFL1. The relevance of ufmylation is however unclear: as DDRGK1 acts as a substrate adapter for ufmylation, it is uncertain whether ufmylation is a collateral effect of the ufmylation process or whether it is required to regulate its activity. In terms of processing, ubiquitinated. Ubiquitination probably triggers proteasomal degradation and is negatively regulated by UFL1, the enzyme involved in the ufmylation of DDRGK1. In terms of tissue distribution, ubiquitously expressed. Higher expression in pancreatic islets, pancreatic acini and testis (at protein level). Highly expressed in the intestinal exocrine cells.

It localises to the endoplasmic reticulum membrane. In terms of biological role, component of the UFM1 ribosome E3 ligase (UREL) complex, a multiprotein complex that catalyzes ufmylation of endoplasmic reticulum-docked proteins. The UREL complex plays a key role in ribosome recycling by mediating mono-ufmylation of the RPL26/uL24 subunit of the 60S ribosome following ribosome dissociation: ufmylation weakens the junction between post-termination 60S subunits and SEC61 translocons, promoting release and recycling of the large ribosomal subunit from the endoplasmic reticulum membrane. Ufmylation of RPL26/uL24 and subsequent 60S ribosome recycling either take place after normal termination of translation or after ribosome stalling during cotranslational translocation at the endoplasmic reticulum. Within the UREL complex, DDRGK1 tethers the complex to the endoplasmic reticulum membrane to restrict its activity to endoplasmic reticulum-docked ribosomes and acts as an ufmylation 'reader': following RPL26/uL24 ufmylation, DDRGK1 specifically binds to ufmylated RPL26/uL24 via its UFIM motif, resulting in stable association between the 60S ribosome and the UREL complex, followed by dissociation of the 60S ribosome subunit from the endoplasmic reticulum membrane. The UREL complex is also involved in reticulophagy in response to endoplasmic reticulum stress by promoting ufmylation of proteins such as CYB5R3 and RPN1, thereby promoting lysosomal degradation of ufmylated proteins. Ufmylation-dependent reticulophagy inhibits the unfolded protein response (UPR) by regulating ERN1/IRE1-alpha stability. Acts as a regulator of immunity by promoting differentiation of B-cells into plasma cells: acts by promoting expansion of the endoplasmic reticulum and regulating the unfolded protein response (UPR). May also be required for TRIP4 ufmylation. May play a role in NF-kappa-B-mediated transcription through regulation of the phosphorylation and the degradation of NFKBIA, the inhibitor of NF-kappa-B. Plays a role in cartilage development through SOX9, inhibiting the ubiquitin-mediated proteasomal degradation of this transcriptional regulator. Required for stabilization and ufmylation of ATG9A. The chain is DDRGK domain-containing protein 1 from Mus musculus (Mouse).